A 524-amino-acid polypeptide reads, in one-letter code: Light-independent protochlorophyllide reductase subunit B (524 aa).

Asp36 is a binding site for [4Fe-4S] cluster. Catalysis depends on Asp290, which acts as the Proton donor. 425 to 426 (GL) provides a ligand contact to substrate.

The protein belongs to the ChlB/BchB/BchZ family. As to quaternary structure, protochlorophyllide reductase is composed of three subunits; ChlL, ChlN and ChlB. Forms a heterotetramer of two ChlB and two ChlN subunits. Requires [4Fe-4S] cluster as cofactor.

The catalysed reaction is chlorophyllide a + oxidized 2[4Fe-4S]-[ferredoxin] + 2 ADP + 2 phosphate = protochlorophyllide a + reduced 2[4Fe-4S]-[ferredoxin] + 2 ATP + 2 H2O. It functions in the pathway porphyrin-containing compound metabolism; chlorophyll biosynthesis (light-independent). In terms of biological role, component of the dark-operative protochlorophyllide reductase (DPOR) that uses Mg-ATP and reduced ferredoxin to reduce ring D of protochlorophyllide (Pchlide) to form chlorophyllide a (Chlide). This reaction is light-independent. The NB-protein (ChlN-ChlB) is the catalytic component of the complex. The chain is Light-independent protochlorophyllide reductase subunit B from Synechococcus sp. (strain CC9605).